Here is a 214-residue protein sequence, read N- to C-terminus: External core antigen (214 aa).

Positions 1–19 are cleaved as a signal peptide; that stretch reads MQLFHLCLIISCTCPTVQA. Positions 25–27 are HBEAG; the sequence is GWL. The segment at 165–214 is disordered; sequence NAPILSTLPETTVVRRRDRGRSPRRRTPSPRRRRSQSPRRRRSQSRESQC. Basic residues predominate over residues 178–207; that stretch reads VRRRDRGRSPRRRTPSPRRRRSQSPRRRRS. One copy of the 1; half-length repeat lies at 186-192; the sequence is SPRRRTP. The 3 X 8 AA repeats of S-P-R-R-R-R-S-Q stretch occupies residues 186–208; the sequence is SPRRRTPSPRRRRSQSPRRRRSQ. A propeptide spanning residues 186–214 is cleaved from the precursor; sequence SPRRRTPSPRRRRSQSPRRRRSQSRESQC. 2 consecutive repeat copies span residues 193–200 and 201–208.

It belongs to the orthohepadnavirus precore antigen family. In terms of assembly, homodimerizes. Phosphorylated. In terms of processing, cleaved by host furin.

Its subcellular location is the secreted. The protein localises to the host nucleus. Functionally, may regulate immune response to the intracellular capsid in acting as a T-cell tolerogen, by having an immunoregulatory effect which prevents destruction of infected cells by cytotoxic T-cells. This immune regulation may predispose to chronicity during perinatal infections and prevent severe liver injury during adult infections. This Homo sapiens (Human) protein is External core antigen.